A 5100-amino-acid polypeptide reads, in one-letter code: Hemicentin-2 (5100 aa).

A signal peptide spans 1-19; it reads MTPGAQLLPLLVAISTAVA. One can recognise a VWFA domain in the interval 37–211; the sequence is DATLAFVFDV…QVSEVLKWVE (175 aa). Residues Asn330, Asn347, Asn380, Asn479, Asn526, Asn548, and Asn675 are each glycosylated (N-linked (GlcNAc...) asparagine). Ig-like C2-type domains follow at residues 426 to 515, 517 to 601, 609 to 692, 699 to 782, 787 to 877, 882 to 968, 973 to 1058, 1063 to 1156, 1161 to 1239, 1246 to 1335, 1340 to 1437, 1442 to 1531, 1536 to 1624, 1629 to 1717, 1722 to 1810, 1825 to 1913, 1920 to 2008, 2011 to 2100, 2105 to 2189, 2196 to 2285, 2290 to 2379, 2384 to 2473, 2478 to 2566, 2571 to 2662, 2667 to 2758, 2781 to 2871, 2875 to 2964, 2971 to 3058, 3063 to 3153, 3157 to 3245, 3250 to 3340, 3345 to 3432, 3438 to 3523, 3528 to 3609, 3614 to 3702, 3707 to 3793, 3798 to 3886, 3891 to 3977, 3982 to 4067, 4071 to 4158, 4163 to 4244, 4252 to 4336, and 4343 to 4428; these read PGVP…IVIT, PPPQ…RATT, PQVS…ETVT, PSVS…IQLV, PRLT…LVVT, PQIA…VELV, PRIH…MWLS, PMIK…YVLR, PQVQ…WKLE, PHWG…AKLV, PSIR…FNLA, PSLL…FQLS, PTIW…TSLE, PTIE…YSVE, PQLL…VEVS, SAHH…KDVT, PNIE…LRVN, PRIT…VILQ, PSIL…KHFN, PAFP…QSLE, PQVT…FALS, PHLT…FSVE, PSIE…TQLS, PTIL…YHVE, PSIS…QDFN, PHEE…YELL, PPVI…KLFT, PQIS…VQLN, PSFK…FVLA, PPTF…FVVS, PQIQ…HTVN, PTIK…RNFT, PPIL…FQLT, PHIE…FRVR, PNVV…FRVE, PTIQ…LDLR, PAIA…YQVT, PTIA…MVLT, PVVK…TRLV, PPVI…VHLT, PVLT…QAVS, PVLQ…KVVT, and PVFQ…ALLA. Cys449 and Cys497 are joined by a disulfide. 6 disulfide bridges follow: Cys539–Cys588, Cys630–Cys678, Cys720–Cys766, Cys808–Cys859, Cys903–Cys952, and Cys994–Cys1042. Omega-N-methylarginine occurs at positions 909, 914, and 915. N-linked (GlcNAc...) asparagine glycosylation is found at Asn1024 and Asn1068. Intrachain disulfides connect Cys1091-Cys1140 and Cys1182-Cys1225. An N-linked (GlcNAc...) asparagine glycan is attached at Asn1264. Residues 1265 to 1293 form a disordered region; it reads ASLPCPAQGTPKPRITWRRGPSSEPLNGR. Cys1269 and Cys1319 are oxidised to a cystine. N-linked (GlcNAc...) asparagine glycosylation is present at Asn1350. Disulfide bonds link Cys1363–Cys1421 and Cys1465–Cys1515. Asn1542 is a glycosylation site (N-linked (GlcNAc...) asparagine). 4 cysteine pairs are disulfide-bonded: Cys1559/Cys1608, Cys1653/Cys1701, Cys1745/Cys1794, and Cys1846/Cys1899. N-linked (GlcNAc...) asparagine glycans are attached at residues Asn1676 and Asn1787. N-linked (GlcNAc...) asparagine glycosylation is present at Asn1934. 2 disulfides stabilise this stretch: Cys1941–Cys1990 and Cys2033–Cys2084. Asn2034, Asn2113, and Asn2119 each carry an N-linked (GlcNAc...) asparagine glycan. 2 disulfide bridges follow: Cys2126-Cys2175 and Cys2218-Cys2269. N-linked (GlcNAc...) asparagine glycosylation is found at Asn2309, Asn2315, Asn2345, and Asn2395. Cys2314 and Cys2363 are disulfide-bonded. The cysteines at positions 2408 and 2457 are disulfide-linked. Residues Asn2469, Asn2502, Asn2541, Asn2606, and Asn2688 are each glycosylated (N-linked (GlcNAc...) asparagine). Cystine bridges form between Cys2501–Cys2550 and Cys2597–Cys2646. 2 disulfide bridges follow: Cys2695–Cys2744 and Cys2806–Cys2855. Asn2892 carries N-linked (GlcNAc...) asparagine glycosylation. Cys2901 and Cys2950 are joined by a disulfide. N-linked (GlcNAc...) asparagine glycosylation is present at Asn2986. Disulfide bonds link Cys2993–Cys3042, Cys3088–Cys3137, Cys3180–Cys3229, Cys3273–Cys3324, and Cys3369–Cys3418. Asn3430 is a glycosylation site (N-linked (GlcNAc...) asparagine). 3 disulfides stabilise this stretch: Cys3462/Cys3507, Cys3551/Cys3593, and Cys3637/Cys3686. Residues Asn3560 and Asn3575 are each glycosylated (N-linked (GlcNAc...) asparagine). 2 N-linked (GlcNAc...) asparagine glycosylation sites follow: Asn3717 and Asn3721. Cys3728 and Cys3777 are disulfide-bonded. Asn3806 is a glycosylation site (N-linked (GlcNAc...) asparagine). Intrachain disulfides connect Cys3819–Cys3870, Cys3912–Cys3961, Cys4003–Cys4051, Cys4093–Cys4142, Cys4184–Cys4231, Cys4274–Cys4322, and Cys4364–Cys4412. An N-linked (GlcNAc...) asparagine glycan is attached at Asn4304. The Nidogen G2 beta-barrel domain occupies 4432-4654; it reads EPRGSRGSMT…QTEENEVGCP (223 aa). 2 N-linked (GlcNAc...) asparagine glycosylation sites follow: Asn4455 and Asn4601. Residues 4668–4708 enclose the EGF-like 1; calcium-binding domain; it reads DKDECSGGPSPCSHTCRNAPGHFSCSCPTGFSLAWDHRNCR. Intrachain disulfides connect Cys4672-Cys4683, Cys4679-Cys4692, Cys4694-Cys4707, Cys4713-Cys4726, Cys4720-Cys4735, Cys4739-Cys4752, Cys4758-Cys4771, Cys4765-Cys4780, Cys4801-Cys4812, Cys4808-Cys4821, and Cys4823-Cys4836. The EGF-like 2; calcium-binding domain occupies 4709 to 4753; sequence DVDECAGNTHLCQEEQRCVNLLGSYNCLASCRPGFRVTADGSNCE. An EGF-like 3; calcium-binding domain is found at 4754–4789; the sequence is DVDECLEQLDECHYNQLCENTPGGHHCGCPRGYRQQ. An EGF-like 4; calcium-binding domain is found at 4797–4837; the sequence is DINECLQLPTPCVYQCQNLQGSYRCLCPPGQTLLRDGRTCI. An N-linked (GlcNAc...) asparagine glycan is attached at Asn4845. Residues 4904–4943 enclose the EGF-like 5; calcium-binding domain; that stretch reads DLDECRVRSLCQHACQNTEGSYYCLCPSGYRLLPSGKNCQ. Intrachain disulfides connect Cys4908–Cys4918, Cys4914–Cys4927, and Cys4929–Cys4942. An N-linked (GlcNAc...) asparagine glycan is attached at Asn5035.

In terms of processing, reported to be phosphorylated; however as this position is extracellular, the in vivo relevance is unsure. In neonatal skin, localized in the pericellular space of basal epidermal keratinocytes (at protein level). In adult skin, restricted to basal keratinocytes of hair follicles and the interfollicular epidermis. Absent from the myotendinous junction but present in skeletal muscle (at protein level). Expressed in the pericellular extracellular matrix of epithelial cells in a number of tissues including embryonic trophectoderm and adult skin and tongue. Also present in the extracellular matrix of some, but not all, blood vessels. Expressed primarily in epithelial cells in the embryonic epidermis, lung, intestine, skeletal hindlimb muscle, tongue and the muscular layers of the esophagus.

The protein localises to the secreted. It localises to the extracellular space. It is found in the extracellular matrix. Its subcellular location is the cleavage furrow. This chain is Hemicentin-2 (Hmcn2), found in Mus musculus (Mouse).